We begin with the raw amino-acid sequence, 540 residues long: Chaperonin GroEL (540 aa).

Residues 30–33, 87–91, Gly414, 479–481, and Asp495 contribute to the ATP site; these read TLGP, DGTTT, and NAL.

Belongs to the chaperonin (HSP60) family. In terms of assembly, forms a cylinder of 14 subunits composed of two heptameric rings stacked back-to-back. Interacts with the co-chaperonin GroES.

Its subcellular location is the cytoplasm. The enzyme catalyses ATP + H2O + a folded polypeptide = ADP + phosphate + an unfolded polypeptide.. Functionally, together with its co-chaperonin GroES, plays an essential role in assisting protein folding. The GroEL-GroES system forms a nano-cage that allows encapsulation of the non-native substrate proteins and provides a physical environment optimized to promote and accelerate protein folding. The protein is Chaperonin GroEL of Rubrobacter xylanophilus (strain DSM 9941 / JCM 11954 / NBRC 16129 / PRD-1).